Consider the following 149-residue polypeptide: Large ribosomal subunit protein uL13 (149 aa).

The protein belongs to the universal ribosomal protein uL13 family. Part of the 50S ribosomal subunit.

This protein is one of the early assembly proteins of the 50S ribosomal subunit, although it is not seen to bind rRNA by itself. It is important during the early stages of 50S assembly. The sequence is that of Large ribosomal subunit protein uL13 from Gemmatimonas aurantiaca (strain DSM 14586 / JCM 11422 / NBRC 100505 / T-27).